Reading from the N-terminus, the 308-residue chain is Glutaminase (308 aa).

Substrate is bound by residues Ser-66, Asn-117, Glu-161, Asn-168, Tyr-192, Tyr-244, and Val-262.

It belongs to the glutaminase family. Homotetramer.

It carries out the reaction L-glutamine + H2O = L-glutamate + NH4(+). The protein is Glutaminase of Salmonella dublin (strain CT_02021853).